The primary structure comprises 189 residues: MAIKLIVGLRNPGSAYEQTRHNAGAWLVTALAQRHNSHFKIDKKMQAELTEIDINNHPCRLLLPLTFMNHSGQTTRIISQFYKIEPGEILIVHDELDLPVGRIKLKTGGGHGGHNGLRDITAQLGTGEFHRLRIGIGHPGHKDLVHQYVLSRPSMHDRQQIYDAIDRGIAIIPIVLSGDIARAMNQVNA.

Tyr16 provides a ligand contact to tRNA. His21 acts as the Proton acceptor in catalysis. Residues Phe67, Asn69, and Asn115 each coordinate tRNA.

Belongs to the PTH family. Monomer.

The protein resides in the cytoplasm. It catalyses the reaction an N-acyl-L-alpha-aminoacyl-tRNA + H2O = an N-acyl-L-amino acid + a tRNA + H(+). In terms of biological role, hydrolyzes ribosome-free peptidyl-tRNAs (with 1 or more amino acids incorporated), which drop off the ribosome during protein synthesis, or as a result of ribosome stalling. Functionally, catalyzes the release of premature peptidyl moieties from peptidyl-tRNA molecules trapped in stalled 50S ribosomal subunits, and thus maintains levels of free tRNAs and 50S ribosomes. In Legionella pneumophila (strain Lens), this protein is Peptidyl-tRNA hydrolase.